Consider the following 723-residue polypeptide: Fatty acid oxidation complex subunit alpha (723 aa).

The enoyl-CoA hydratase/isomerase stretch occupies residues 1–189 (MIYQADTLQV…KIGLLDAVVE (189 aa)). Asp296 provides a ligand contact to substrate. The interval 311–723 (SKDTERAAVL…FYGAQQQGSI (413 aa)) is 3-hydroxyacyl-CoA dehydrogenase. NAD(+)-binding positions include Met325, Asp344, 401–403 (VVE), Lys408, and Ser430. His451 acts as the For 3-hydroxyacyl-CoA dehydrogenase activity in catalysis. Asn454 serves as a coordination point for NAD(+). Residues Asn501 and Tyr661 each coordinate substrate.

In the N-terminal section; belongs to the enoyl-CoA hydratase/isomerase family. This sequence in the C-terminal section; belongs to the 3-hydroxyacyl-CoA dehydrogenase family. Heterotetramer of two alpha chains (FadB) and two beta chains (FadA).

The catalysed reaction is a (3S)-3-hydroxyacyl-CoA + NAD(+) = a 3-oxoacyl-CoA + NADH + H(+). It catalyses the reaction a (3S)-3-hydroxyacyl-CoA = a (2E)-enoyl-CoA + H2O. The enzyme catalyses a 4-saturated-(3S)-3-hydroxyacyl-CoA = a (3E)-enoyl-CoA + H2O. It carries out the reaction (3S)-3-hydroxybutanoyl-CoA = (3R)-3-hydroxybutanoyl-CoA. The catalysed reaction is a (3Z)-enoyl-CoA = a 4-saturated (2E)-enoyl-CoA. It catalyses the reaction a (3E)-enoyl-CoA = a 4-saturated (2E)-enoyl-CoA. It functions in the pathway lipid metabolism; fatty acid beta-oxidation. Functionally, involved in the aerobic and anaerobic degradation of long-chain fatty acids via beta-oxidation cycle. Catalyzes the formation of 3-oxoacyl-CoA from enoyl-CoA via L-3-hydroxyacyl-CoA. It can also use D-3-hydroxyacyl-CoA and cis-3-enoyl-CoA as substrate. This is Fatty acid oxidation complex subunit alpha from Vibrio parahaemolyticus serotype O3:K6 (strain RIMD 2210633).